The chain runs to 254 residues: 3-oxo-5-alpha-steroid 4-dehydrogenase 2 (254 aa).

4 consecutive transmembrane segments (helical) span residues 8–28 (VPVLAGSATLATMGTLILCLG), 72–92 (PRSLFGPPGNVLLALFSAHYF), 146–166 (FSFGVFLFILGMGINIHSDYT), and 206–226 (LATWSVPAFAFAFFTLCFLGM).

It belongs to the steroid 5-alpha reductase family. In terms of tissue distribution, expressed in high levels in the prostate and many other androgen-sensitive tissues.

Its subcellular location is the microsome membrane. It is found in the endoplasmic reticulum membrane. The enzyme catalyses a 3-oxo-5alpha-steroid + NADP(+) = a 3-oxo-Delta(4)-steroid + NADPH + H(+). It carries out the reaction 17beta-hydroxy-5alpha-androstan-3-one + NADP(+) = testosterone + NADPH + H(+). It catalyses the reaction 5alpha-pregnane-3,20-dione + NADP(+) = progesterone + NADPH + H(+). In terms of biological role, converts testosterone (T) into 5-alpha-dihydrotestosterone (DHT) and progesterone or corticosterone into their corresponding 5-alpha-3-oxosteroids. It plays a central role in sexual differentiation and androgen physiology. The polypeptide is 3-oxo-5-alpha-steroid 4-dehydrogenase 2 (Srd5a2) (Rattus norvegicus (Rat)).